Reading from the N-terminus, the 70-residue chain is DNA gyrase inhibitor YacG (70 aa).

Positions 9, 12, 28, and 32 each coordinate Zn(2+). A disordered region spans residues 44-70; the sequence is SRKIPGSSIDPESIVTTNNKQDNVDEQ.

This sequence belongs to the DNA gyrase inhibitor YacG family. As to quaternary structure, interacts with GyrB. It depends on Zn(2+) as a cofactor.

Inhibits all the catalytic activities of DNA gyrase by preventing its interaction with DNA. Acts by binding directly to the C-terminal domain of GyrB, which probably disrupts DNA binding by the gyrase. This is DNA gyrase inhibitor YacG from Legionella pneumophila subsp. pneumophila (strain Philadelphia 1 / ATCC 33152 / DSM 7513).